We begin with the raw amino-acid sequence, 514 residues long: Retron Vc95 probable ATPase (514 aa).

An ATP-binding motif is present at residues 92–99 (GNNGSGKS).

Functionally, probable ATPase component of antiviral defense system retron Vc95, composed of a non-coding RNA (ncRNA), a reverse transcriptase (RT), this protein and a putative HNH endonuclease. Expression of retron Vc95 confers protection against bacteriophages T2, T4 and T6. At multiplicity of infection (MOI) of 0.02 cultures slow growth when infected with T4 but do not collapse, at MOI 2 cultures enter growth stasis. This Vibrio cholerae serotype O1 biovar El Tor protein is Retron Vc95 probable ATPase.